Reading from the N-terminus, the 264-residue chain is Glutamate racemase (264 aa).

Substrate-binding positions include 10 to 11 (DS) and 42 to 43 (YG). The Proton donor/acceptor role is filled by Cys73. Residue 74-75 (NT) participates in substrate binding. Residue Cys183 is the Proton donor/acceptor of the active site. 184-185 (TH) serves as a coordination point for substrate.

Belongs to the aspartate/glutamate racemases family.

The enzyme catalyses L-glutamate = D-glutamate. Its pathway is cell wall biogenesis; peptidoglycan biosynthesis. Its function is as follows. Provides the (R)-glutamate required for cell wall biosynthesis. This Streptococcus pneumoniae (strain ATCC BAA-255 / R6) protein is Glutamate racemase.